Reading from the N-terminus, the 183-residue chain is UPF0200 protein MMP1282 (183 aa).

Position 8 to 15 (8 to 15) interacts with ATP; sequence GMPGSGKS.

This sequence belongs to the UPF0200 family.

This is UPF0200 protein MMP1282 from Methanococcus maripaludis (strain DSM 14266 / JCM 13030 / NBRC 101832 / S2 / LL).